Here is an 86-residue protein sequence, read N- to C-terminus: MTRFVLFISCFFLIDMIVECKKEGYLVGNDGCKYGCITRPHQYCVHECELKKGTDGYCAYWLACYCYNMPDWVKTWSSATNKCKGK.

A signal peptide spans methionine 1 to cysteine 20. Positions lysine 22–lysine 84 constitute an LCN-type CS-alpha/beta domain. Disulfide bonds link cysteine 32–cysteine 83, cysteine 36–cysteine 58, cysteine 44–cysteine 64, and cysteine 48–cysteine 66. Lysine 84 is modified (lysine amide).

It belongs to the long (4 C-C) scorpion toxin superfamily. Sodium channel inhibitor family. Beta subfamily. In terms of tissue distribution, expressed by the venom gland.

The protein resides in the secreted. Beta toxin that show multiple effects. It enhances the open probability at more negative potentials of human Nav1.3/SCN3A and Nav1.6/SCN8A, of the insect channel BgNaV1 and of arachnid VdNaV1 channel. It promotes an important shift in slow inactivation processes as a function of the prepulse voltage in human Nav1.3/SCN3A and Nav1.6/SCN8A and a small shift in Nav1.1/SCN1A, Nav1.2/SCN2A and Nav1.4/SCN4A. Finally, it reduces the peak of sodium currents in Nav1.3/SCN3A (80% inhibition at 70 nM of toxin), Nav1.6/SCN8A (55.3%), Nav1.1/SCN1A (53.3%), Nav1.5/SCN5A (46.7%), Nav1.2/SCN2A (42.7%) and Nav1.4/SCN4A (20%) voltage-gated sodium channels. It has also been shown to affect the sodium current permeability of rat cerebellum granular cells in a partially reversible manner. In vivo, an intraperitoneal injection (20 ug) into mice produces excitability, respiratory problems, convulsions and death, within the first 30 minutes after injection. The polypeptide is Beta-mammal/insect toxin To1 (Tityus obscurus (Amazonian scorpion)).